Consider the following 1008-residue polypeptide: Histone deacetylase complex subunit SAP130-A (1008 aa).

Residues 1 to 31 (MNSQQFPRQAASMPSPQVSNSGASVGQNVQG) show a composition bias toward polar residues. 4 disordered regions span residues 1 to 44 (MNSQ…DVQS), 113 to 134 (SKSTMPSRPIAPAPPSAMSAVP), 415 to 435 (IQSDYGTERGNLIPIPGHRAS), and 617 to 720 (TPGG…PATI). Positions 35-44 (EVARDMDVQS) are enriched in basic and acidic residues. Residues 618-644 (PGGTTVMQSHSQSPGIGSSPAQGSSPR) show a composition bias toward polar residues. Residues 678-697 (ADQPSAAASLPSSHHPAAAV) are compositionally biased toward low complexity.

The protein belongs to the SAP130 family.

Its subcellular location is the nucleus. In terms of biological role, acts as a transcriptional repressor. This Xenopus laevis (African clawed frog) protein is Histone deacetylase complex subunit SAP130-A (sap130-a).